Consider the following 317-residue polypeptide: Homoserine O-acetyltransferase (317 aa).

Residue cysteine 142 is the Acyl-thioester intermediate of the active site. Residues lysine 163 and serine 192 each coordinate substrate. Histidine 235 functions as the Proton acceptor in the catalytic mechanism. The active site involves glutamate 237. Residue arginine 249 participates in substrate binding.

Belongs to the MetA family.

The protein localises to the cytoplasm. The catalysed reaction is L-homoserine + acetyl-CoA = O-acetyl-L-homoserine + CoA. It participates in amino-acid biosynthesis; L-methionine biosynthesis via de novo pathway; O-acetyl-L-homoserine from L-homoserine: step 1/1. Its function is as follows. Transfers an acetyl group from acetyl-CoA to L-homoserine, forming acetyl-L-homoserine. This is Homoserine O-acetyltransferase from Rhizorhabdus wittichii (strain DSM 6014 / CCUG 31198 / JCM 15750 / NBRC 105917 / EY 4224 / RW1) (Sphingomonas wittichii).